The primary structure comprises 177 residues: MSRVAKAPVTVPNGVAVTQNGRQVEVKGTKGTLSFNLHALVELKQEEGKLQLAPVKESKDAWMQAGTARAVLNNLVKGVSEGFERKLQLIGVGYKAAVKGTSINLNLGFSHPIDYSLPEGVTAETPTATEIILKSADKQLLGQVASEIRGYRPPEPYKGKGVRYSDEVVLRKEAKKK.

It belongs to the universal ribosomal protein uL6 family. Part of the 50S ribosomal subunit.

This protein binds to the 23S rRNA, and is important in its secondary structure. It is located near the subunit interface in the base of the L7/L12 stalk, and near the tRNA binding site of the peptidyltransferase center. The sequence is that of Large ribosomal subunit protein uL6 from Acinetobacter baylyi (strain ATCC 33305 / BD413 / ADP1).